The chain runs to 428 residues: tRNA(Ile)-lysidine synthase (428 aa).

Residue 28 to 33 participates in ATP binding; the sequence is SGGVDS.

Belongs to the tRNA(Ile)-lysidine synthase family.

The protein localises to the cytoplasm. The catalysed reaction is cytidine(34) in tRNA(Ile2) + L-lysine + ATP = lysidine(34) in tRNA(Ile2) + AMP + diphosphate + H(+). Ligates lysine onto the cytidine present at position 34 of the AUA codon-specific tRNA(Ile) that contains the anticodon CAU, in an ATP-dependent manner. Cytidine is converted to lysidine, thus changing the amino acid specificity of the tRNA from methionine to isoleucine. The protein is tRNA(Ile)-lysidine synthase of Streptococcus pyogenes serotype M1.